Reading from the N-terminus, the 431-residue chain is Argininosuccinate lyase (431 aa).

It belongs to the lyase 1 family. Argininosuccinate lyase subfamily.

It localises to the cytoplasm. The enzyme catalyses 2-(N(omega)-L-arginino)succinate = fumarate + L-arginine. It functions in the pathway amino-acid biosynthesis; L-arginine biosynthesis; L-arginine from L-ornithine and carbamoyl phosphate: step 3/3. This is Argininosuccinate lyase from Xanthomonas campestris pv. campestris (strain ATCC 33913 / DSM 3586 / NCPPB 528 / LMG 568 / P 25).